The primary structure comprises 275 residues: MQQMTIFVISDSSGETALTVAQTAVSQYPTIQVSYQRFPFIQTDSILDGILNLAKKQRAMIFHTLVSPKLSQHVREFAAMNHLQQFDCIQPAMDVMHQATGLEPEGVPGLVHNLNDTYFDRIAAMEFAVTYDDGKDPTGLLKADIVILGVSRTSKTPLSLFLANRNLRVANLPLSPKTQLPDELWQVDPKRIFGLTNRPEILRKIRQERMLSYGLPADSAYSDTAKITEELAYAQKLYKKIGCLVIDVSNKSIEETATLIMESVDYDLIPHSLQD.

149–156 (GVSRTSKT) is a binding site for ADP.

This sequence belongs to the pyruvate, phosphate/water dikinase regulatory protein family. PDRP subfamily.

It carries out the reaction N(tele)-phospho-L-histidyl/L-threonyl-[pyruvate, phosphate dikinase] + ADP = N(tele)-phospho-L-histidyl/O-phospho-L-threonyl-[pyruvate, phosphate dikinase] + AMP + H(+). The catalysed reaction is N(tele)-phospho-L-histidyl/O-phospho-L-threonyl-[pyruvate, phosphate dikinase] + phosphate + H(+) = N(tele)-phospho-L-histidyl/L-threonyl-[pyruvate, phosphate dikinase] + diphosphate. Bifunctional serine/threonine kinase and phosphorylase involved in the regulation of the pyruvate, phosphate dikinase (PPDK) by catalyzing its phosphorylation/dephosphorylation. The sequence is that of Putative pyruvate, phosphate dikinase regulatory protein from Levilactobacillus brevis (strain ATCC 367 / BCRC 12310 / CIP 105137 / JCM 1170 / LMG 11437 / NCIMB 947 / NCTC 947) (Lactobacillus brevis).